Here is a 508-residue protein sequence, read N- to C-terminus: Phenylalanine--tRNA ligase alpha subunit (508 aa).

N-acetylalanine is present on Ala2. Thr190 bears the Phosphothreonine mark. Phosphoserine is present on residues Ser193 and Ser301. Lys311 is modified (N6-acetyllysine). Residues Thr329, 372–374 (QIE), and Tyr412 each bind L-phenylalanine. A Mg(2+)-binding site is contributed by Glu414. Phe438 contributes to the L-phenylalanine binding site.

This sequence belongs to the class-II aminoacyl-tRNA synthetase family. Phe-tRNA synthetase alpha subunit type 2 subfamily. In terms of assembly, heterotetramer; dimer of two heterodimers formed by FARSA and FARSB.

The protein resides in the cytoplasm. It carries out the reaction tRNA(Phe) + L-phenylalanine + ATP = L-phenylalanyl-tRNA(Phe) + AMP + diphosphate + H(+). This chain is Phenylalanine--tRNA ligase alpha subunit (FARSA), found in Homo sapiens (Human).